Consider the following 276-residue polypeptide: Adenylate kinase (276 aa).

ATP is bound at residue 52–57 (GAGKGT). The interval 72–101 (ATGDMLRAQVAAKTPLGREAKKIMDAGGLV) is NMP. AMP-binding positions include threonine 73, arginine 78, 99–101 (GLV), 128–131 (GFPR), and glutamine 135. The interval 169 to 206 (GRLVHPASGRSYHKIFNPPKAPMTDDVTGEPLIQRSDD) is LID. Residues arginine 170 and 179 to 180 (SY) contribute to the ATP site. Residues arginine 203 and arginine 214 each contribute to the AMP site. Position 242 (glutamine 242) interacts with ATP.

Belongs to the adenylate kinase family. AK2 subfamily. In terms of assembly, monomer.

Its subcellular location is the cytoplasm. The protein localises to the cytosol. The protein resides in the mitochondrion intermembrane space. The enzyme catalyses AMP + ATP = 2 ADP. Catalyzes the reversible transfer of the terminal phosphate group between ATP and AMP. Plays an important role in cellular energy homeostasis and in adenine nucleotide metabolism. Adenylate kinase activity is critical for regulation of the phosphate utilization and the AMP de novo biosynthesis pathways. The sequence is that of Adenylate kinase (adk1) from Pyrenophora tritici-repentis (strain Pt-1C-BFP) (Wheat tan spot fungus).